The sequence spans 344 residues: Glyceraldehyde-3-phosphate dehydrogenase (344 aa).

NAD(+) contacts are provided by residues 11–12 (TI) and glycine 110. Position 139–141 (139–141 (SCN)) interacts with D-glyceraldehyde 3-phosphate. Catalysis depends on cysteine 140, which acts as the Nucleophile. Arginine 169 serves as a coordination point for NAD(+). 195 to 196 (HG) is a binding site for D-glyceraldehyde 3-phosphate. Glutamine 302 contributes to the NAD(+) binding site.

Belongs to the glyceraldehyde-3-phosphate dehydrogenase family. As to quaternary structure, homotetramer.

The protein resides in the cytoplasm. It carries out the reaction D-glyceraldehyde 3-phosphate + phosphate + NADP(+) = (2R)-3-phospho-glyceroyl phosphate + NADPH + H(+). The enzyme catalyses D-glyceraldehyde 3-phosphate + phosphate + NAD(+) = (2R)-3-phospho-glyceroyl phosphate + NADH + H(+). The protein operates within carbohydrate degradation; glycolysis; pyruvate from D-glyceraldehyde 3-phosphate: step 1/5. The chain is Glyceraldehyde-3-phosphate dehydrogenase from Pyrobaculum islandicum (strain DSM 4184 / JCM 9189 / GEO3).